A 361-amino-acid chain; its full sequence is MAPIKVGINGFGRIGRMVFQSMCEDNVLGTELDVVAVVDMSTDAEYFAYQMKFDTVHGRPKYTVEVAKSSPSAKKPDVLVVNGHRILCVKADRNPADLPWGKLGVDYVIESTGLFTDKAKAEGHVKGGAKKVVISAPASGGAKTIVMGVNQHEYNPATHHVVSNASCTTNCLAPIVHVLTKENFGIETGLMTTIHSYTATQKTVDGVSIKDWRGGRAAAVNIIPSTTGAAKAVGMVIPSTKGKLTGMSFRVPTPDVSVVDLTFRATRDTSIQEIDAALKKASQTYMKGILGFTDEELVSSDFINDARSSIYDSKATLQNNLPGEKRFFKVVSWYDNEWGYSHRVVDLVRFMGAKDRSSSKL.

NAD(+) is bound by residues 13 to 14 (RI), Asp-39, and Arg-93. Residues 166–168 (SCT), Thr-198, 227–228 (TG), and Arg-250 each bind D-glyceraldehyde 3-phosphate. The active-site Nucleophile is Cys-167. Asn-336 lines the NAD(+) pocket. Positions 359–361 (SKL) match the Microbody targeting signal motif.

This sequence belongs to the glyceraldehyde-3-phosphate dehydrogenase family. In terms of assembly, homotetramer.

It localises to the glycosome. It catalyses the reaction D-glyceraldehyde 3-phosphate + phosphate + NAD(+) = (2R)-3-phospho-glyceroyl phosphate + NADH + H(+). It participates in carbohydrate degradation; glycolysis; pyruvate from D-glyceraldehyde 3-phosphate: step 1/5. The protein is Glyceraldehyde-3-phosphate dehydrogenase, glycosomal (GAPDG) of Crithidia fasciculata.